Consider the following 57-residue polypeptide: Neurotoxin Oh9-1 (57 aa).

Intrachain disulfides connect C3–C19, C12–C37, C41–C49, and C50–C55.

Belongs to the three-finger toxin family. Short-chain subfamily. As to expression, expressed by the venom gland.

Its subcellular location is the secreted. This toxin binds and inhibits rat muscle adult alpha-1-beta-1-delta-epsilon/CHRNA1-CHRNB1-CHRND-CHRNE (IC(50)=3.1 uM) and fetal alpha-1-beta-1-gamma-delta/CHRNA1-CHRNB1-CHRNG-CHRND (IC(50)=5.6 uM) nicotinic acetylcholine receptors (nAChR). Shows a very low inhibition on rat neuronal alpha-3-beta-2/CHRNA3-CHRNB2 nAChR (IC(50)=50.2 uM) nAChR. Binds to the acetylcholine-binding pocket and acts as a competitive antagonist. Does not inhibit human glycine receptor (homopentamer composed of alpha-1 subunits, GLRA1), but seems to potentiate it (about 2-fold increased activity). In Ophiophagus hannah (King cobra), this protein is Neurotoxin Oh9-1.